We begin with the raw amino-acid sequence, 313 residues long: D-alanine--D-alanine ligase (313 aa).

The region spanning 108-308 (KLVWQQLGIP…YQELVVKVLA (201 aa)) is the ATP-grasp domain. 138 to 193 (VAKLGLPLFVKPASEGSSVAVIKVKTADALVPALEEAVKFDKIVVVEKSIEGGGEY) serves as a coordination point for ATP. Mg(2+) contacts are provided by Asp-262, Glu-275, and Asn-277.

This sequence belongs to the D-alanine--D-alanine ligase family. The cofactor is Mg(2+). Mn(2+) is required as a cofactor.

Its subcellular location is the cytoplasm. It carries out the reaction 2 D-alanine + ATP = D-alanyl-D-alanine + ADP + phosphate + H(+). It participates in cell wall biogenesis; peptidoglycan biosynthesis. In terms of biological role, cell wall formation. The sequence is that of D-alanine--D-alanine ligase from Paraburkholderia phymatum (strain DSM 17167 / CIP 108236 / LMG 21445 / STM815) (Burkholderia phymatum).